The primary structure comprises 475 residues: TOM1-like protein 1 (475 aa).

The VHS domain occupies 22-154; it reads ATFAGVQTED…DLLKKGVQFP (133 aa). The tract at residues 155-175 is disordered; the sequence is PLDGEPETKQEAGQISPSRPT. Residues 165–175 are compositionally biased toward polar residues; it reads EAGQISPSRPT. Serine 170 is modified (phosphoserine). The region spanning 199 to 287 is the GAT domain; it reads EQIGKLHSEL…AILGYERFTR (89 aa). Positions 296–317 are disordered; it reads KRNPTEANQTSSEPSAPSCDLL. Residues 300-310 are compositionally biased toward polar residues; that stretch reads TEANQTSSEPS. Serine 313 is subject to Phosphoserine. Positions 392–395 are interaction with GRB2; sequence YDNF. The SH3-binding signature appears at 421–425; that stretch reads LPPLP. The interval 442–445 is interaction with PIK3R1; the sequence is YEVM. Tyrosine 458 carries the post-translational modification Phosphotyrosine. The SH2-binding signature appears at 458–461; it reads YEEI.

This sequence belongs to the TOM1 family. In terms of assembly, interacts with the SH2 and SH3 domains of FYN when phosphorylated. Also interacts with GRB2 and PIK3R1 when phosphorylated. Interacts with LYN. Post-translationally, phosphorylated on tyrosines by FYN and LYN.

The protein resides in the golgi apparatus. It is found in the golgi stack. Its subcellular location is the endosome membrane. It localises to the cytoplasm. The protein localises to the membrane. In terms of biological role, probable adapter protein involved in signaling pathways. Interacts with the SH2 and SH3 domains of various signaling proteins when it is phosphorylated. May promote FYN activation, possibly by disrupting intramolecular SH3-dependent interactions. The protein is TOM1-like protein 1 (Tom1l1) of Rattus norvegicus (Rat).